The primary structure comprises 223 residues: Ribose-5-phosphate isomerase A (223 aa).

Residues 28 to 31, 81 to 84, and 94 to 97 contribute to the substrate site; these read TGST, DGAD, and KGGG. The Proton acceptor role is filled by E103. Residue K121 coordinates substrate.

Belongs to the ribose 5-phosphate isomerase family. As to quaternary structure, homodimer.

The catalysed reaction is aldehydo-D-ribose 5-phosphate = D-ribulose 5-phosphate. Its pathway is carbohydrate degradation; pentose phosphate pathway; D-ribose 5-phosphate from D-ribulose 5-phosphate (non-oxidative stage): step 1/1. In terms of biological role, catalyzes the reversible conversion of ribose-5-phosphate to ribulose 5-phosphate. The sequence is that of Ribose-5-phosphate isomerase A from Ruthia magnifica subsp. Calyptogena magnifica.